The sequence spans 328 residues: Phenylalanine--tRNA ligase alpha subunit (328 aa).

Residue Glu-245 participates in Mg(2+) binding.

Belongs to the class-II aminoacyl-tRNA synthetase family. Phe-tRNA synthetase alpha subunit type 1 subfamily. As to quaternary structure, tetramer of two alpha and two beta subunits. It depends on Mg(2+) as a cofactor.

The protein localises to the cytoplasm. The enzyme catalyses tRNA(Phe) + L-phenylalanine + ATP = L-phenylalanyl-tRNA(Phe) + AMP + diphosphate + H(+). This chain is Phenylalanine--tRNA ligase alpha subunit, found in Helicobacter acinonychis (strain Sheeba).